A 122-amino-acid polypeptide reads, in one-letter code: Glycine cleavage system H protein (122 aa).

In terms of domain architecture, Lipoyl-binding spans 19–101 (MVTVGVTHYA…ETEGWLWKMT (83 aa)). The residue at position 60 (lysine 60) is an N6-lipoyllysine.

The protein belongs to the GcvH family. The glycine cleavage system is composed of four proteins: P, T, L and H. Requires (R)-lipoate as cofactor.

The glycine cleavage system catalyzes the degradation of glycine. The H protein shuttles the methylamine group of glycine from the P protein to the T protein. The polypeptide is Glycine cleavage system H protein (Bartonella tribocorum (strain CIP 105476 / IBS 506)).